The following is a 382-amino-acid chain: Na(+)/H(+) antiporter NhaA (382 aa).

11 consecutive transmembrane segments (helical) span residues 14–34 (AGGI…NSSF), 49–69 (MSVS…LIGL), 87–107 (IFPA…YVAF), 117–137 (GWAI…ALLG), 146–166 (VFLL…IAFF), 171–191 (LSVL…LLNS), 205–225 (FILW…GVVL), 247–267 (ALHP…NAGI), 285–305 (VALG…YVAV), 321–341 (IFAV…ISSL), and 356–376 (LGIL…LHIS).

It belongs to the NhaA Na(+)/H(+) (TC 2.A.33) antiporter family.

The protein localises to the cell inner membrane. It carries out the reaction Na(+)(in) + 2 H(+)(out) = Na(+)(out) + 2 H(+)(in). In terms of biological role, na(+)/H(+) antiporter that extrudes sodium in exchange for external protons. The chain is Na(+)/H(+) antiporter NhaA from Aliivibrio salmonicida (strain LFI1238) (Vibrio salmonicida (strain LFI1238)).